A 218-amino-acid polypeptide reads, in one-letter code: uncharacterized protein (218 aa).

Composition is skewed to polar residues over residues M1–F21 and L68–I102. 3 disordered regions span residues M1 to S39, E63 to G116, and G170 to Q205. A compositionally biased stretch (basic and acidic residues) spans K183–H195.

This is an uncharacterized protein from Caenorhabditis elegans.